The sequence spans 66 residues: Large ribosomal subunit protein uL29 (66 aa).

It belongs to the universal ribosomal protein uL29 family.

This chain is Large ribosomal subunit protein uL29, found in Bacillus mycoides (strain KBAB4) (Bacillus weihenstephanensis).